The sequence spans 160 residues: Protein-export protein SecB (160 aa).

This sequence belongs to the SecB family. In terms of assembly, homotetramer, a dimer of dimers. One homotetramer interacts with 1 SecA dimer.

The protein resides in the cytoplasm. Functionally, one of the proteins required for the normal export of preproteins out of the cell cytoplasm. It is a molecular chaperone that binds to a subset of precursor proteins, maintaining them in a translocation-competent state. It also specifically binds to its receptor SecA. The sequence is that of Protein-export protein SecB from Beijerinckia indica subsp. indica (strain ATCC 9039 / DSM 1715 / NCIMB 8712).